A 1594-amino-acid polypeptide reads, in one-letter code: Protein SHORTAGE IN CHIASMATA 1 (1594 aa).

5 disordered regions span residues 1148-1180 (DSRS…SKKK), 1239-1283 (APFK…QPDF), 1396-1426 (AADI…YADN), 1491-1523 (RSRA…NTKR), and 1536-1594 (GGNK…LVWK). Positions 1151-1165 (SVMTDSSSSVSSGPD) are enriched in low complexity. 2 stretches are compositionally biased toward basic and acidic residues: residues 1254 to 1265 (PSKDPERFDKKS) and 1402 to 1414 (SSER…DSKY). Residues 1577–1594 (QSLSYTANGTGQTKLVWK) show a composition bias toward polar residues.

It belongs to the XPF family. As to quaternary structure, interacts with PTD. As to expression, highest levels in young buds, where male meiosis occurs. Also present at low levels in plantlets, leaves, flowers, and roots.

It localises to the nucleus. Essential for the formation of class I meiotic crossovers. The protein is Protein SHORTAGE IN CHIASMATA 1 of Arabidopsis thaliana (Mouse-ear cress).